The primary structure comprises 1228 residues: DNA-directed RNA polymerase subunit beta (1228 aa).

Positions 1175–1204 are disordered; it reads ESVDEDEQPQGLGAFEIGGDEIEEDKEDDK. A compositionally biased stretch (acidic residues) spans 1192-1202; that stretch reads GGDEIEEDKED.

It belongs to the RNA polymerase beta chain family. As to quaternary structure, the RNAP catalytic core consists of 2 alpha, 1 beta, 1 beta' and 1 omega subunit. When a sigma factor is associated with the core the holoenzyme is formed, which can initiate transcription.

The catalysed reaction is RNA(n) + a ribonucleoside 5'-triphosphate = RNA(n+1) + diphosphate. Its function is as follows. DNA-dependent RNA polymerase catalyzes the transcription of DNA into RNA using the four ribonucleoside triphosphates as substrates. In Caldicellulosiruptor bescii (strain ATCC BAA-1888 / DSM 6725 / KCTC 15123 / Z-1320) (Anaerocellum thermophilum), this protein is DNA-directed RNA polymerase subunit beta.